We begin with the raw amino-acid sequence, 161 residues long: Calcium-binding protein CML24 (161 aa).

4 EF-hand domains span residues 13–48 (GSMD…LSPT), 49–84 (ASPE…GIGG), 90–125 (NDVS…LGEK), and 126–161 (CSVQ…GGGA). Ca(2+)-binding residues include Asp26, Asn28, Asp30, Lys32, Glu37, Asp62, Asp64, Asn66, Glu73, Asp103, Asp105, Asn107, Arg109, Glu114, Asp139, Asp141, Asp143, Cys145, and Glu150.

Expressed in seed coat, seedling radical, cotyledons, hypocotyl, shoot apex and elongating root. Expressed in the vasculature of cotyledons, leaves and roots. Highly expressed in guard cells, trichomes and hydathodes. Expressed in inflorescence stem branch points, silique abscission zone, young and mature styles and stigmatic papillae, mature anthers and developing seed.

Calcium-binding protein that may positively regulate abscisic acid (ABA) inhibition of germination and seedling development. May be required for photoperiod-induced flowering and function in ion homeostasis. This is Calcium-binding protein CML24 (CML24) from Arabidopsis thaliana (Mouse-ear cress).